A 1104-amino-acid polypeptide reads, in one-letter code: Lon protease homolog, mitochondrial (1104 aa).

A mitochondrion-targeting transit peptide spans 1 to 58 (MLPLRAFARLAQRPRLSRPTQLARSSLPRPSPSRPAAHYLALAPAPSTRFLHSSPPVL). 2 disordered regions span residues 8-144 (ARLA…KEVA) and 275-295 (EGSQ…SEVP). Low complexity predominate over residues 22-46 (LARSSLPRPSPSRPAAHYLALAPAP). Residues 80 to 103 (KQDDQVEKPLPDAESSKSAEERAK) show a composition bias toward basic and acidic residues. Residues 104–128 (SQSSKPDIKASSSDSVSSSAPAPGS) are compositionally biased toward low complexity. Over residues 129–139 (ADGGSPPGAGG) the composition is skewed to gly residues. In terms of domain architecture, Lon N-terminal spans 155-444 (VLAIPITHRP…RALVLLKKEL (290 aa)). The segment covering 281 to 291 (AKGEGEVKSFE) has biased composition (basic and acidic residues). 597–604 (GPPGVGKT) serves as a coordination point for ATP. The region spanning 895 to 1082 (SPPAGVSTGL…RQVLHEAFRG (188 aa)) is the Lon proteolytic domain. Residues serine 987 and lysine 1030 contribute to the active site.

It belongs to the peptidase S16 family. As to quaternary structure, homohexamer or homoheptamer. Organized in a ring with a central cavity.

Its subcellular location is the mitochondrion matrix. It catalyses the reaction Hydrolysis of proteins in presence of ATP.. Functionally, ATP-dependent serine protease that mediates the selective degradation of misfolded, unassembled or oxidatively damaged polypeptides as well as certain short-lived regulatory proteins in the mitochondrial matrix. May also have a chaperone function in the assembly of inner membrane protein complexes. Participates in the regulation of mitochondrial gene expression and in the maintenance of the integrity of the mitochondrial genome. Binds to mitochondrial DNA in a site-specific manner. In Cryptococcus neoformans var. neoformans serotype D (strain JEC21 / ATCC MYA-565) (Filobasidiella neoformans), this protein is Lon protease homolog, mitochondrial.